Reading from the N-terminus, the 194-residue chain is Phosphoheptose isomerase (194 aa).

The 158-residue stretch at 37-194 (IANSFKQGGK…LIEFEMAKTA (158 aa)) folds into the SIS domain. Residue 52 to 54 (NGG) participates in substrate binding. Residues H61 and E65 each coordinate Zn(2+). Substrate-binding positions include E65, 93-94 (ND), 119-121 (STS), S124, and Q172. Q172 and H180 together coordinate Zn(2+).

It belongs to the SIS family. GmhA subfamily. Homotetramer. It depends on Zn(2+) as a cofactor.

Its subcellular location is the cytoplasm. It catalyses the reaction 2 D-sedoheptulose 7-phosphate = D-glycero-alpha-D-manno-heptose 7-phosphate + D-glycero-beta-D-manno-heptose 7-phosphate. The protein operates within carbohydrate biosynthesis; D-glycero-D-manno-heptose 7-phosphate biosynthesis; D-glycero-alpha-D-manno-heptose 7-phosphate and D-glycero-beta-D-manno-heptose 7-phosphate from sedoheptulose 7-phosphate: step 1/1. It functions in the pathway bacterial outer membrane biogenesis; LOS core biosynthesis. Functionally, catalyzes the isomerization of sedoheptulose 7-phosphate in D-glycero-D-manno-heptose 7-phosphate. This Haemophilus ducreyi (strain 35000HP / ATCC 700724) protein is Phosphoheptose isomerase.